Reading from the N-terminus, the 418-residue chain is Enolase 1 (418 aa).

Gln-162 is a binding site for (2R)-2-phosphoglycerate. The active-site Proton donor is the Glu-204. Mg(2+) is bound by residues Asp-241, Glu-285, and Asp-312. Lys-337, Arg-366, Ser-367, and Lys-388 together coordinate (2R)-2-phosphoglycerate. Lys-337 acts as the Proton acceptor in catalysis.

The protein belongs to the enolase family. It depends on Mg(2+) as a cofactor.

Its subcellular location is the cytoplasm. It is found in the secreted. The protein resides in the cell surface. It catalyses the reaction (2R)-2-phosphoglycerate = phosphoenolpyruvate + H2O. It functions in the pathway carbohydrate degradation; glycolysis; pyruvate from D-glyceraldehyde 3-phosphate: step 4/5. Catalyzes the reversible conversion of 2-phosphoglycerate (2-PG) into phosphoenolpyruvate (PEP). It is essential for the degradation of carbohydrates via glycolysis. In Lactococcus lactis subsp. cremoris (strain SK11), this protein is Enolase 1.